A 273-amino-acid polypeptide reads, in one-letter code: Large ribosomal subunit protein uL2 (273 aa).

Residues glycine 222–lysine 273 form a disordered region. The segment covering aspartate 229–asparagine 239 has biased composition (basic and acidic residues).

It belongs to the universal ribosomal protein uL2 family. In terms of assembly, part of the 50S ribosomal subunit. Forms a bridge to the 30S subunit in the 70S ribosome.

Its function is as follows. One of the primary rRNA binding proteins. Required for association of the 30S and 50S subunits to form the 70S ribosome, for tRNA binding and peptide bond formation. It has been suggested to have peptidyltransferase activity; this is somewhat controversial. Makes several contacts with the 16S rRNA in the 70S ribosome. This is Large ribosomal subunit protein uL2 from Tolumonas auensis (strain DSM 9187 / NBRC 110442 / TA 4).